Reading from the N-terminus, the 516-residue chain is Bifunctional purine biosynthesis protein PurH (516 aa).

The MGS-like domain occupies 1 to 146; sequence MTRLALLSVS…KNYAHVTVLS (146 aa).

Belongs to the PurH family.

It carries out the reaction (6R)-10-formyltetrahydrofolate + 5-amino-1-(5-phospho-beta-D-ribosyl)imidazole-4-carboxamide = 5-formamido-1-(5-phospho-D-ribosyl)imidazole-4-carboxamide + (6S)-5,6,7,8-tetrahydrofolate. It catalyses the reaction IMP + H2O = 5-formamido-1-(5-phospho-D-ribosyl)imidazole-4-carboxamide. It participates in purine metabolism; IMP biosynthesis via de novo pathway; 5-formamido-1-(5-phospho-D-ribosyl)imidazole-4-carboxamide from 5-amino-1-(5-phospho-D-ribosyl)imidazole-4-carboxamide (10-formyl THF route): step 1/1. The protein operates within purine metabolism; IMP biosynthesis via de novo pathway; IMP from 5-formamido-1-(5-phospho-D-ribosyl)imidazole-4-carboxamide: step 1/1. This Rippkaea orientalis (strain PCC 8801 / RF-1) (Cyanothece sp. (strain PCC 8801)) protein is Bifunctional purine biosynthesis protein PurH.